Reading from the N-terminus, the 38-residue chain is Allatostatin-C (38 aa).

Residues Met-1 to Asp-19 constitute a propeptide that is removed on maturation. Gln-22 carries the post-translational modification Pyrrolidone carboxylic acid; partial.

The protein belongs to the allatostatin family. In terms of tissue distribution, in its non-pyroglutamate form, expressed in antennal lobe (AL), corpora cardiaca (CC), corpora allata (CA) and gnathal ganglion (GNG) with expression in AL detected in most animals and expression in CC, CA and GNG detected in few animals (at protein level). In its pyroglutamate form, expressed in antennal lobe (AL), corpora cardiaca (CC) and corpora allata (CA) with expression detected in few animals (at protein level). Not expressed in GNG (protein level).

It localises to the secreted. In terms of biological role, strongly inhibits juvenile hormone biosynthesis. The chain is Allatostatin-C from Agrotis ipsilon (Black cutworm moth).